The following is a 388-amino-acid chain: 2-methylene-furan-3-one reductase (388 aa).

The N-terminal 60 residues, 1 to 60 (MEALLSSTTLQLKPLHPPSSFSSLHSPFSSISVLRVKGSKKAETFIQRSNFSTVLPLRVS), are a transit peptide targeting the chloroplast. Residues lysine 125, 240–241 (GV), 263–266 (STGK), tyrosine 281, 330–332 (FVV), and 377–378 (RA) contribute to the NADP(+) site. Lysine 125 provides a ligand contact to substrate.

The protein belongs to the zinc-containing alcohol dehydrogenase family. Quinone oxidoreductase subfamily. In terms of assembly, monomer.

The protein localises to the plastid. It is found in the chloroplast. The catalysed reaction is 4-hydroxy-2,5-dimethyl-furan-3(2H)-one + NADP(+) = 4-hydroxy-5-methyl-2-methylenefuran-3(2H)-one + NADPH + H(+). In terms of biological role, enone oxidoreductase involved in the biosynthesis of 4-hydroxy-2,5-dimethyl-3(2H)-furanone (HDMF or furaneol). Can use both NADH and NADPH as the electron donor. The sequence is that of 2-methylene-furan-3-one reductase (EO) from Solanum lycopersicum (Tomato).